We begin with the raw amino-acid sequence, 252 residues long: 3-dehydroquinate dehydratase (252 aa).

Residues glutamate 46–arginine 48 and arginine 82 each bind 3-dehydroquinate. Residue histidine 143 is the Proton donor/acceptor of the active site. Lysine 170 acts as the Schiff-base intermediate with substrate in catalysis. 3-dehydroquinate-binding residues include arginine 212, serine 231, and glutamine 235.

Belongs to the type-I 3-dehydroquinase family. As to quaternary structure, homodimer.

The enzyme catalyses 3-dehydroquinate = 3-dehydroshikimate + H2O. It participates in metabolic intermediate biosynthesis; chorismate biosynthesis; chorismate from D-erythrose 4-phosphate and phosphoenolpyruvate: step 3/7. Involved in the third step of the chorismate pathway, which leads to the biosynthesis of aromatic amino acids. Catalyzes the cis-dehydration of 3-dehydroquinate (DHQ) and introduces the first double bond of the aromatic ring to yield 3-dehydroshikimate. The polypeptide is 3-dehydroquinate dehydratase (Listeria monocytogenes serotype 4a (strain HCC23)).